The following is a 182-amino-acid chain: Peptidyl-prolyl cis-trans isomerase C, mitochondrial (182 aa).

The transit peptide at 1–20 (MFKRSIIQQSRLFSNSASRL) directs the protein to the mitochondrion. The PPIase cyclophilin-type domain occupies 25-181 (FFDPAVNGTK…AEIVIEEAGE (157 aa)).

Belongs to the cyclophilin-type PPIase family.

The protein localises to the mitochondrion matrix. It carries out the reaction [protein]-peptidylproline (omega=180) = [protein]-peptidylproline (omega=0). Its activity is regulated as follows. Inhibited by the immunosuppressant drug cyclosporin A and by SDZ NIM811, a PPIase inhibitor. In terms of biological role, PPIases accelerate the folding of proteins. It catalyzes the cis-trans isomerization of proline imidic peptide bonds in oligopeptides. This isozyme is required for growth on lactate at high temperature. This is Peptidyl-prolyl cis-trans isomerase C, mitochondrial (CPR3) from Saccharomyces cerevisiae (strain ATCC 204508 / S288c) (Baker's yeast).